We begin with the raw amino-acid sequence, 163 residues long: Crossover junction endodeoxyribonuclease RuvC (163 aa).

Residues aspartate 9, glutamate 76, and aspartate 148 contribute to the active site. Positions 9, 76, and 148 each coordinate Mg(2+).

It belongs to the RuvC family. Homodimer which binds Holliday junction (HJ) DNA. The HJ becomes 2-fold symmetrical on binding to RuvC with unstacked arms; it has a different conformation from HJ DNA in complex with RuvA. In the full resolvosome a probable DNA-RuvA(4)-RuvB(12)-RuvC(2) complex forms which resolves the HJ. Mg(2+) serves as cofactor.

The protein resides in the cytoplasm. The catalysed reaction is Endonucleolytic cleavage at a junction such as a reciprocal single-stranded crossover between two homologous DNA duplexes (Holliday junction).. The RuvA-RuvB-RuvC complex processes Holliday junction (HJ) DNA during genetic recombination and DNA repair. Endonuclease that resolves HJ intermediates. Cleaves cruciform DNA by making single-stranded nicks across the HJ at symmetrical positions within the homologous arms, yielding a 5'-phosphate and a 3'-hydroxyl group; requires a central core of homology in the junction. The consensus cleavage sequence is 5'-(A/T)TT(C/G)-3'. Cleavage occurs on the 3'-side of the TT dinucleotide at the point of strand exchange. HJ branch migration catalyzed by RuvA-RuvB allows RuvC to scan DNA until it finds its consensus sequence, where it cleaves and resolves the cruciform DNA. The sequence is that of Crossover junction endodeoxyribonuclease RuvC from Trichodesmium erythraeum (strain IMS101).